Here is a 562-residue protein sequence, read N- to C-terminus: Calcium-dependent protein kinase 5 (562 aa).

Positions 118-372 (ELDKYKLGKG…VHKIVNHKWF (255 aa)) constitute a Protein kinase domain. ATP is bound by residues 124–132 (LGKGSYGNV) and K147. The active-site Proton acceptor is the D238. The J domain autoinhibitory motif signature appears at 394–402 (KFKKFHKLC). The interval 394–429 (KFKKFHKLCKIKKLAITCIAYQLNKKKFGKMKKTFE) is j domain. The J domain EF-hand interaction motif signature appears at 403–412 (KIKKLAITCI). 4 EF-hand domains span residues 419-453 (KKFG…VGDN), 454-489 (EIDR…HSIL), 490-525 (EQDA…SNDQ), and 528-562 (FSKE…GRQS). D432, N434, D436, E443, D467, D469, N471, E478, D503, N505, D507, E514, D541, N543, D545, Y547, and E552 together coordinate Ca(2+).

Belongs to the protein kinase superfamily. Ser/Thr protein kinase family. CDPK subfamily. Mg(2+) serves as cofactor. Post-translationally, may be palmitoylated. In terms of processing, autophosphorylated in vitro.

The protein localises to the cytoplasm. It is found in the cytoplasmic vesicle. Its subcellular location is the secretory vesicle. The protein resides in the microneme membrane. It localises to the cell membrane. The enzyme catalyses L-seryl-[protein] + ATP = O-phospho-L-seryl-[protein] + ADP + H(+). It carries out the reaction L-threonyl-[protein] + ATP = O-phospho-L-threonyl-[protein] + ADP + H(+). With respect to regulation, activated by calcium. Upon calcium binding to the EF-hand domains, the C-terminus of the junction domain (J domain) undergoes a conformational change which results in the dissociation of the pseudo-substrate inhibitory motif from the catalytic domain. This, in turn, may facilitate the autophosphorylation of the activation loop at Thr-278, which leads to the kinase activation. Its function is as follows. Calcium-dependent protein kinase which acts as a sensor and effector of intracellular Ca(2+) levels probably in part downstream of cGMP-activated PKG kinase. Plays a central role in host erythrocytes and hepatocytes infection cycles. During the liver stage, involved in sporozoite motility and thus in sporozoite invasion of host hepatocytes, probably together with CDPK1 and CDPK4. Involved in merosome egress from host hepatocytes, probably together with CDPK4. Required for the release of hepatic merozoites from merosomes in the host blood stream. During the asexual blood stage, required for merozoite egress from host erythrocytes by triggering microneme secretion. Phosphorylates transporter NPT1 at late schizont stage. In Plasmodium berghei (strain Anka), this protein is Calcium-dependent protein kinase 5.